The primary structure comprises 306 residues: Recombination-associated protein RdgC (306 aa).

It belongs to the RdgC family.

Its subcellular location is the cytoplasm. It is found in the nucleoid. Its function is as follows. May be involved in recombination. The polypeptide is Recombination-associated protein RdgC (Pseudomonas putida (strain GB-1)).